Reading from the N-terminus, the 180-residue chain is Beta-lactoglobulin-1 (180 aa).

The signal sequence occupies residues 1–18 (MKCLLLALGLALMCGIQA). 2 cysteine pairs are disulfide-bonded: Cys-84–Cys-178 and Cys-124–Cys-137.

Belongs to the calycin superfamily. Lipocalin family. In terms of assembly, monomer.

The protein localises to the secreted. In terms of biological role, lactoglobulin is the primary component of whey, it binds retinol and is probably involved in the transport of that molecule. The sequence is that of Beta-lactoglobulin-1 (LGB1) from Equus caballus (Horse).